A 186-amino-acid polypeptide reads, in one-letter code: Nicotinamide-nucleotide adenylyltransferase (186 aa).

The protein belongs to the archaeal NMN adenylyltransferase family.

Its subcellular location is the cytoplasm. It carries out the reaction beta-nicotinamide D-ribonucleotide + ATP + H(+) = diphosphate + NAD(+). Its pathway is cofactor biosynthesis; NAD(+) biosynthesis; NAD(+) from nicotinamide D-ribonucleotide: step 1/1. This Thermococcus sibiricus (strain DSM 12597 / MM 739) protein is Nicotinamide-nucleotide adenylyltransferase.